The following is a 133-amino-acid chain: Large-conductance mechanosensitive channel (133 aa).

2 helical membrane passes run 17–37 and 73–93; these read AFIL…GGAF and IGSF…LYLA.

This sequence belongs to the MscL family. In terms of assembly, homopentamer.

It localises to the cell inner membrane. Functionally, channel that opens in response to stretch forces in the membrane lipid bilayer. May participate in the regulation of osmotic pressure changes within the cell. This is Large-conductance mechanosensitive channel from Synechococcus elongatus (strain ATCC 33912 / PCC 7942 / FACHB-805) (Anacystis nidulans R2).